The chain runs to 74 residues: Putative defensin-like protein 128 (74 aa).

The signal sequence occupies residues 1-24 (MSKLTNVVIFIVFFLGMMAKETQG). 4 disulfides stabilise this stretch: Cys-28-Cys-72, Cys-37-Cys-56, Cys-42-Cys-66, and Cys-46-Cys-68.

It belongs to the DEFL family.

Its subcellular location is the secreted. This is Putative defensin-like protein 128 (LCR8) from Arabidopsis thaliana (Mouse-ear cress).